The chain runs to 84 residues: UPF0410 protein YmgE (84 aa).

Helical transmembrane passes span M1–M21, G27–A47, and G58–F78.

The protein belongs to the UPF0410 family.

It is found in the cell inner membrane. In Escherichia coli O127:H6 (strain E2348/69 / EPEC), this protein is UPF0410 protein YmgE (ymgE).